We begin with the raw amino-acid sequence, 566 residues long: Mannitol 2-dehydrogenase (566 aa).

Ile106 to Ala117 serves as a coordination point for NAD(+).

This sequence belongs to the mannitol dehydrogenase family. Monomer.

It catalyses the reaction D-mannitol + NAD(+) = D-fructose + NADH + H(+). Its function is as follows. Catalyzes the NAD(H)-dependent interconversion of D-fructose and D-mannitol in the mannitol metabolic pathway. This chain is Mannitol 2-dehydrogenase, found in Pyrenophora tritici-repentis (strain Pt-1C-BFP) (Wheat tan spot fungus).